A 746-amino-acid polypeptide reads, in one-letter code: Teichoic acid poly(glycerol phosphate) polymerase (746 aa).

CDP-glycerol is bound by residues 473–477, R540, 573–574, 610–612, 652–653, and D657; these read WHGTP, PT, RMH, and SS.

Belongs to the CDP-glycerol glycerophosphotransferase family.

The protein localises to the cell membrane. The enzyme catalyses 4-O-[(2R)-glycerylphospho]-N-acetyl-beta-D-mannosaminyl-(1-&gt;4)-N-acetyl-alpha-D-glucosaminyl di-trans,octa-cis-undecaprenyl diphosphate + n CDP-glycerol = 4-O-{[(2R)-1-glycerylphospho](n)-(2R)-1-glycerylphospho}-N-acetyl-beta-D-mannosaminyl-(1-&gt;4)-N-acetyl-alpha-D-glucosaminyl undecaprenyl diphosphate + n CMP + n H(+). The protein operates within cell wall biogenesis; poly(glycerol phosphate) teichoic acid biosynthesis. Its function is as follows. Responsible for the polymerization of the main chain of the major teichoic acid by sequential transfer of glycerol phosphate units from CDP-glycerol to the disaccharide linkage unit. Synthesizes polymers of approximately 35 glycerol phosphate units in length. The chain is Teichoic acid poly(glycerol phosphate) polymerase (tagF) from Bacillus subtilis (strain 168).